The following is a 239-amino-acid chain: MERPQNRGNDQMRTVRIIPGFQKYPDGSVLIEAGDTRVMCSAMMEEKVPPFLRGKGSGWVTAEYSLLPSSTETRTQREASKGKISGRTSEIQRLIGRSLRAVVDMPAMGERTLWIDCDVLQADGGTRTAAITGSFVALYLAFKKFKEQGIIETIPVKDFVAAISVGIIDGTPILDLEYIEDSQADVDMNVVMTGNGDFIEIQGTAEGTVFSRAELDQLLELAGKGIQELIALQKTILGV.

Phosphate contacts are provided by residues Arg87 and 125–127; that span reads GTR.

This sequence belongs to the RNase PH family. In terms of assembly, homohexameric ring arranged as a trimer of dimers.

The catalysed reaction is tRNA(n+1) + phosphate = tRNA(n) + a ribonucleoside 5'-diphosphate. Its function is as follows. Phosphorolytic 3'-5' exoribonuclease that plays an important role in tRNA 3'-end maturation. Removes nucleotide residues following the 3'-CCA terminus of tRNAs; can also add nucleotides to the ends of RNA molecules by using nucleoside diphosphates as substrates, but this may not be physiologically important. Probably plays a role in initiation of 16S rRNA degradation (leading to ribosome degradation) during starvation. In Syntrophomonas wolfei subsp. wolfei (strain DSM 2245B / Goettingen), this protein is Ribonuclease PH.